Consider the following 457-residue polypeptide: Multidrug resistance protein MdtK (457 aa).

A run of 12 helical transmembrane segments spans residues 11–31 (LLAL…MGFV), 53–73 (IWLP…PVIA), 93–113 (WLAG…GYII), 127–147 (AVGY…FQVA), 160–180 (GMVI…IFIY), 188–208 (LGGV…FIAM), 243–263 (LPIA…ALLV), 276–296 (IALN…AAVT), 314–334 (AART…IFTV), 357–377 (LMLL…GSGI), 387–407 (IFFI…YILA), and 418–438 (PAGF…MMML).

This sequence belongs to the multi antimicrobial extrusion (MATE) (TC 2.A.66.1) family. MdtK subfamily.

It is found in the cell inner membrane. Its function is as follows. Multidrug efflux pump that functions probably as a Na(+)/drug antiporter. In Citrobacter koseri (strain ATCC BAA-895 / CDC 4225-83 / SGSC4696), this protein is Multidrug resistance protein MdtK.